We begin with the raw amino-acid sequence, 158 residues long: MPLLTTGKSFIRALEKSGALGVYVPLEGGFEGRYQRRLRANGYTPYNLTARGLGDLSSYLTGIHGVRPPHLGKKNIGQDAAVGPVYFVPPIATYQLETLPPKSKGLVLWIIEGMILSRAEIEYLTYLPQQEPRLKIVVEMGGERYFRWQPLEQSIQAA.

This sequence belongs to the complex I NdhN subunit family. In terms of assembly, NDH-1 can be composed of about 15 different subunits; different subcomplexes with different compositions have been identified which probably have different functions.

Its subcellular location is the cellular thylakoid membrane. It catalyses the reaction a plastoquinone + NADH + (n+1) H(+)(in) = a plastoquinol + NAD(+) + n H(+)(out). It carries out the reaction a plastoquinone + NADPH + (n+1) H(+)(in) = a plastoquinol + NADP(+) + n H(+)(out). In terms of biological role, NDH-1 shuttles electrons from an unknown electron donor, via FMN and iron-sulfur (Fe-S) centers, to quinones in the respiratory and/or the photosynthetic chain. The immediate electron acceptor for the enzyme in this species is believed to be plastoquinone. Couples the redox reaction to proton translocation, and thus conserves the redox energy in a proton gradient. Cyanobacterial NDH-1 also plays a role in inorganic carbon-concentration. The chain is NAD(P)H-quinone oxidoreductase subunit N from Gloeothece citriformis (strain PCC 7424) (Cyanothece sp. (strain PCC 7424)).